Consider the following 84-residue polypeptide: Small ribosomal subunit protein uS17 (84 aa).

It belongs to the universal ribosomal protein uS17 family. Part of the 30S ribosomal subunit.

One of the primary rRNA binding proteins, it binds specifically to the 5'-end of 16S ribosomal RNA. The chain is Small ribosomal subunit protein uS17 from Vibrio vulnificus (strain CMCP6).